The sequence spans 335 residues: Partner of xrn-2 protein 1 (335 aa).

Residues 7–91 form the XRN2-binding (XTBD) domain; sequence VEAEKKLWES…SYVKASAAKK (85 aa). The segment at 95–119 is disordered; it reads VKTSDLEGASDESKKVKMEKSPSPV. The segment covering 105-114 has biased composition (basic and acidic residues); sequence DESKKVKMEK.

Interacts (via N-terminus) with xrn-2; the interaction is direct.

The protein localises to the nucleus. It is found in the nucleolus. Its subcellular location is the nucleoplasm. In terms of biological role, plays a role in maintenance of steady-state concentration and turnover of microRNAs (miRNA) by degradation of mature miRNA in complex with the exoribonuclease xrn-2. Stabilizes and enhances the accumulation and activity of the exoribonuclease xrn-2, and thus contributes to miRNA turnover. This chain is Partner of xrn-2 protein 1, found in Caenorhabditis elegans.